We begin with the raw amino-acid sequence, 233 residues long: Small ribosomal subunit protein uS3 (233 aa).

A KH type-2 domain is found at 39-107 (VRKYLTKELE…PAQINIAEVR (69 aa)). The segment at 214 to 233 (VEQPEKPSAQPKKQQRKGRK) is disordered.

Belongs to the universal ribosomal protein uS3 family. Part of the 30S ribosomal subunit. Forms a tight complex with proteins S10 and S14.

Binds the lower part of the 30S subunit head. Binds mRNA in the 70S ribosome, positioning it for translation. The polypeptide is Small ribosomal subunit protein uS3 (Pectobacterium atrosepticum (strain SCRI 1043 / ATCC BAA-672) (Erwinia carotovora subsp. atroseptica)).